The sequence spans 404 residues: Peroxisomal biogenesis factor 9 (404 aa).

Helical transmembrane passes span 73–93 (FLFLGVTLFLFLSLLQQSLVF), 94–114 (LLGVFLRLVQLVGHFLLLLMG), and 149–169 (FGLDVVTAIVVIGDNELFQVV). The disordered stretch occupies residues 180 to 214 (DGQRSQQSQNSGMNVASSSRGRHQLVPDRPGSQLS). The span at 181 to 198 (GQRSQQSQNSGMNVASSS) shows a compositional bias: polar residues. Residues 349 to 369 (FFVGLVSWIVDETAACVVFCL) traverse the membrane as a helical segment.

The protein resides in the peroxisome membrane. Functionally, essential for the import of peroxisomal matrix proteins. This Yarrowia lipolytica (strain CLIB 122 / E 150) (Yeast) protein is Peroxisomal biogenesis factor 9 (PEX9).